Reading from the N-terminus, the 546-residue chain is CTP synthase (546 aa).

Residues 1 to 267 are amidoligase domain; the sequence is MSKFVFVTGG…AQQTLELLNL (267 aa). Serine 13 contributes to the CTP binding site. A UTP-binding site is contributed by serine 13. ATP-binding positions include 14-19 and aspartate 71; that span reads SIGKGI. Residues aspartate 71 and glutamate 141 each contribute to the Mg(2+) site. CTP-binding positions include 148–150, 188–193, and lysine 224; these read DIE and KTKPTQ. Residues 188–193 and lysine 224 contribute to the UTP site; that span reads KTKPTQ. The Glutamine amidotransferase type-1 domain occupies 292–534; that stretch reads EIAIVGKYVQ…MKAALKGREE (243 aa). L-glutamine is bound at residue glycine 354. Cysteine 381 acts as the Nucleophile; for glutamine hydrolysis in catalysis. L-glutamine is bound by residues 382 to 385, glutamate 405, and arginine 462; that span reads LGMQ. Active-site residues include histidine 507 and glutamate 509.

Belongs to the CTP synthase family. Homotetramer.

The enzyme catalyses UTP + L-glutamine + ATP + H2O = CTP + L-glutamate + ADP + phosphate + 2 H(+). The catalysed reaction is L-glutamine + H2O = L-glutamate + NH4(+). It catalyses the reaction UTP + NH4(+) + ATP = CTP + ADP + phosphate + 2 H(+). The protein operates within pyrimidine metabolism; CTP biosynthesis via de novo pathway; CTP from UDP: step 2/2. Allosterically activated by GTP, when glutamine is the substrate; GTP has no effect on the reaction when ammonia is the substrate. The allosteric effector GTP functions by stabilizing the protein conformation that binds the tetrahedral intermediate(s) formed during glutamine hydrolysis. Inhibited by the product CTP, via allosteric rather than competitive inhibition. Its function is as follows. Catalyzes the ATP-dependent amination of UTP to CTP with either L-glutamine or ammonia as the source of nitrogen. Regulates intracellular CTP levels through interactions with the four ribonucleotide triphosphates. The sequence is that of CTP synthase from Microcystis aeruginosa (strain NIES-843 / IAM M-2473).